The primary structure comprises 548 residues: Calcium-transporting ATPase (548 aa).

An N-terminal signal peptide occupies residues 1–21 (MNFKSTVITAMCCFFSFAVLA). A divalent metal cation-binding residues include aspartate 37 and threonine 78. Threonine 78 functions as the Phosphothreonine intermediate in the catalytic mechanism. Residues asparagine 99 and 160 to 162 (KDR) contribute to the substrate site. An ATP-binding motif is present at residues 179 to 187 (DGKTGDWIT). 5 residues coordinate a divalent metal cation: aspartate 305, histidine 309, aspartate 352, histidine 353, and histidine 488.

The cofactor is Mg(2+).

The protein localises to the cell inner membrane. The enzyme catalyses Ca(2+)(in) + ATP + H2O = Ca(2+)(out) + ADP + phosphate + H(+). Its activity is regulated as follows. Completely inhibited by vanadate(3-). Also inhibited by lanthanoid atom and phosphate. Not inhibited by N-ethylmaleimide, 1,3-dicyclohexylcarbodiimide, oligomycin, ouabain, valinomycin, nigericin, thapsigargin, cyclopiazonic acid or fluorescein isothiocyanate. Functionally, catalyzes the hydrolysis of ATP coupled with the transport of calcium. Has some hydrolysis activity also with dATP, GTP, UTP, ITP and 4-nitrophenyl phosphate as substrate. No activity with ADP, CTP, acetyl dihydrogen phosphate or AMP-PNP as substrate. This is Calcium-transporting ATPase from Myroides odoratus (Flavobacterium odoratum).